The primary structure comprises 336 residues: Alcohol dehydrogenase (336 aa).

The Zn(2+) site is built by Cys37, His58, Cys89, Cys92, Cys95, Cys103, and Cys145.

This sequence belongs to the zinc-containing alcohol dehydrogenase family. The cofactor is Zn(2+).

The enzyme catalyses a primary alcohol + NAD(+) = an aldehyde + NADH + H(+). The catalysed reaction is a secondary alcohol + NAD(+) = a ketone + NADH + H(+). The sequence is that of Alcohol dehydrogenase (adh) from Staphylococcus aureus (strain Mu50 / ATCC 700699).